The chain runs to 430 residues: 3-phosphoshikimate 1-carboxyvinyltransferase (430 aa).

3-phosphoshikimate contacts are provided by Lys33, Ser34, and Arg38. Lys33 provides a ligand contact to phosphoenolpyruvate. Gly101 and Arg129 together coordinate phosphoenolpyruvate. Ser172, Ser173, Gln174, Ser201, Glu319, and His346 together coordinate 3-phosphoshikimate. Gln174 provides a ligand contact to phosphoenolpyruvate. Catalysis depends on Glu319, which acts as the Proton acceptor. Arg350, Arg391, and Lys416 together coordinate phosphoenolpyruvate.

It belongs to the EPSP synthase family. In terms of assembly, monomer.

It localises to the cytoplasm. The catalysed reaction is 3-phosphoshikimate + phosphoenolpyruvate = 5-O-(1-carboxyvinyl)-3-phosphoshikimate + phosphate. It functions in the pathway metabolic intermediate biosynthesis; chorismate biosynthesis; chorismate from D-erythrose 4-phosphate and phosphoenolpyruvate: step 6/7. Its function is as follows. Catalyzes the transfer of the enolpyruvyl moiety of phosphoenolpyruvate (PEP) to the 5-hydroxyl of shikimate-3-phosphate (S3P) to produce enolpyruvyl shikimate-3-phosphate and inorganic phosphate. This chain is 3-phosphoshikimate 1-carboxyvinyltransferase, found in Corynebacterium glutamicum (strain ATCC 13032 / DSM 20300 / JCM 1318 / BCRC 11384 / CCUG 27702 / LMG 3730 / NBRC 12168 / NCIMB 10025 / NRRL B-2784 / 534).